The chain runs to 316 residues: GTPase Era (316 aa).

Positions Arg-9 to Glu-190 constitute an Era-type G domain. Positions Gly-17–Ser-24 are G1. Gly-17–Ser-24 contributes to the GTP binding site. The G2 stretch occupies residues Gln-43 to Phe-47. The segment at Asp-64–Gly-67 is G3. GTP contacts are provided by residues Asp-64–Ile-68 and Asn-140–Asp-143. Positions Asn-140–Asp-143 are G4. Residues Ile-169–Ala-171 form a G5 region. One can recognise a KH type-2 domain in the interval Val-221–Glu-298.

It belongs to the TRAFAC class TrmE-Era-EngA-EngB-Septin-like GTPase superfamily. Era GTPase family. As to quaternary structure, monomer.

The protein resides in the cytoplasm. It is found in the cell inner membrane. In terms of biological role, an essential GTPase that binds both GDP and GTP, with rapid nucleotide exchange. Plays a role in 16S rRNA processing and 30S ribosomal subunit biogenesis and possibly also in cell cycle regulation and energy metabolism. This chain is GTPase Era, found in Caulobacter vibrioides (strain ATCC 19089 / CIP 103742 / CB 15) (Caulobacter crescentus).